A 168-amino-acid polypeptide reads, in one-letter code: Secretory-abundant heat soluble protein 33020 (168 aa).

A signal peptide spans 1–19 (MARFLVALALFGVVAMTAA). An SAHS-c1 region spans residues 26–57 (EWSGKPWLGKFVAEVSDKSENWEAFVDALGLP). The tract at residues 72-100 (YKQGEHYHHILSLPDKNINKDIEFTLGQE) is SAHS-c2. Residues 113-162 (KYFEDGNKLVADVSIPAKGKSIHDVYDVQGDQLIKSYKVGDVVAKKWFKK) form an SAHS-c3 region.

The protein belongs to the Secretory-abundant heat soluble protein (SAHS) family.

The protein resides in the secreted. Secreted heat soluble protein acting as a molecular shield in water-deficient condition. Tardigrade-specific intrinsically disordered proteins (TDPs) are essential for desiccation tolerance by forming non-crystalline amorphous solids upon desiccation, and this vitrified state mirrors their protective capabilities. This chain is Secretory-abundant heat soluble protein 33020, found in Hypsibius exemplaris (Freshwater tardigrade).